The following is a 235-amino-acid chain: Leucyl/phenylalanyl-tRNA--protein transferase (235 aa).

The protein belongs to the L/F-transferase family.

It is found in the cytoplasm. It catalyses the reaction N-terminal L-lysyl-[protein] + L-leucyl-tRNA(Leu) = N-terminal L-leucyl-L-lysyl-[protein] + tRNA(Leu) + H(+). The enzyme catalyses N-terminal L-arginyl-[protein] + L-leucyl-tRNA(Leu) = N-terminal L-leucyl-L-arginyl-[protein] + tRNA(Leu) + H(+). It carries out the reaction L-phenylalanyl-tRNA(Phe) + an N-terminal L-alpha-aminoacyl-[protein] = an N-terminal L-phenylalanyl-L-alpha-aminoacyl-[protein] + tRNA(Phe). Functions in the N-end rule pathway of protein degradation where it conjugates Leu, Phe and, less efficiently, Met from aminoacyl-tRNAs to the N-termini of proteins containing an N-terminal arginine or lysine. In Azoarcus sp. (strain BH72), this protein is Leucyl/phenylalanyl-tRNA--protein transferase.